We begin with the raw amino-acid sequence, 431 residues long: Levansucrase LscC (431 aa).

Residues Trp-61, Asp-62, Ala-148, Arg-218, and Asp-219 each coordinate sucrose. Asp-62 functions as the Nucleophile in the catalytic mechanism. Glu-303 serves as the catalytic Proton donor/acceptor.

Belongs to the glycosyl hydrolase 68 family.

The protein resides in the periplasm. It carries out the reaction [6)-beta-D-fructofuranosyl-(2-&gt;](n) alpha-D-glucopyranoside + sucrose = [6)-beta-D-fructofuranosyl-(2-&gt;](n+1) alpha-D-glucopyranoside + D-glucose. Its function is as follows. Catalyzes the synthesis of levan, a fructose polymer, by transferring the fructosyl moiety from sucrose to a growing acceptor molecule. The chain is Levansucrase LscC from Pseudomonas savastanoi pv. glycinea (Pseudomonas syringae pv. glycinea).